Here is a 199-residue protein sequence, read N- to C-terminus: Small ribosomal subunit protein uS4 (199 aa).

The S4 RNA-binding domain occupies 91–151; it reads SRLDNLVYRF…EKSKNVKAIA (61 aa).

It belongs to the universal ribosomal protein uS4 family. In terms of assembly, part of the 30S ribosomal subunit. Contacts protein S5. The interaction surface between S4 and S5 is involved in control of translational fidelity.

Its function is as follows. One of the primary rRNA binding proteins, it binds directly to 16S rRNA where it nucleates assembly of the body of the 30S subunit. In terms of biological role, with S5 and S12 plays an important role in translational accuracy. The protein is Small ribosomal subunit protein uS4 of Exiguobacterium sp. (strain ATCC BAA-1283 / AT1b).